We begin with the raw amino-acid sequence, 2430 residues long: Protein TASOR 2 (2430 aa).

Phosphoserine occurs at positions 19, 219, and 384. Disordered stretches follow at residues 416-488 (LDRK…GETA) and 577-648 (RGTS…SQSS). Position 685 is a phosphoserine (S685). Positions 704-727 (LLLQQKPPDDPVVKPKDRPPSARV) are disordered. The span at 710–723 (PPDDPVVKPKDRPP) shows a compositional bias: basic and acidic residues. 3 positions are modified to phosphoserine: S1025, S1087, and S1172. The disordered stretch occupies residues 1331-1360 (LTESREVSSADNVSVYPSVSEEPVENKERK). The residue at position 1541 (S1541) is a Phosphoserine. Residues 1700–1727 (EAELHKETTGPGTAGPQSNTTSSLKGER) are disordered. The segment covering 1714 to 1723 (GPQSNTTSSL) has biased composition (polar residues). S1848 carries the post-translational modification Phosphoserine. K2007 is covalently cross-linked (Glycyl lysine isopeptide (Lys-Gly) (interchain with G-Cter in SUMO2)). Phosphoserine occurs at positions 2009, 2037, 2062, and 2066. A disordered region spans residues 2046–2069 (SDPRPQGQPRRGYTASSLDSSSSW).

The protein belongs to the TASOR family.

The polypeptide is Protein TASOR 2 (Homo sapiens (Human)).